The primary structure comprises 336 residues: DNA repair protein Rad51 homolog (336 aa).

The span at 1–10 shows a compositional bias: polar residues; it reads MEKLTNVQAQ. The disordered stretch occupies residues 1 to 20; the sequence is MEKLTNVQAQQEEEEEEGPL. ATP is bound at residue 124-131; that stretch reads GEFRCGKT.

Belongs to the RecA family. RAD51 subfamily. As to quaternary structure, interacts with Rrp6; the interaction is required for the recruitment of spn-A to the DNA-damage response foci. As to expression, highly expressed in ovaries.

It is found in the nucleus. The protein resides in the cytoplasm. Plays an important role in homologous strand exchange, a key step in DNA repair through homologous recombination (HR). Binds to single and double-stranded DNA and exhibits DNA-dependent ATPase activity. Underwinds duplex DNA. Spindle genes are required for each of the symmetry-breaking steps that generate polarity during egg axis formation; oocyte positioning at the posterior of the cyst to generate the first AP polarity and inhibition of gurken (grk) signaling to the follicle cell layer to polarize first the AP axis and then DV axis. May have a role in female meiosis. The sequence is that of DNA repair protein Rad51 homolog (spn-A) from Drosophila melanogaster (Fruit fly).